The sequence spans 190 residues: ATP synthase subunit b (190 aa).

The chain crosses the membrane as a helical span at residues 24–44 (IVGSLICFVVILFFFWKLVLP).

The protein belongs to the ATPase B chain family. As to quaternary structure, F-type ATPases have 2 components, F(1) - the catalytic core - and F(0) - the membrane proton channel. F(1) has five subunits: alpha(3), beta(3), gamma(1), delta(1), epsilon(1). F(0) has three main subunits: a(1), b(2) and c(10-14). The alpha and beta chains form an alternating ring which encloses part of the gamma chain. F(1) is attached to F(0) by a central stalk formed by the gamma and epsilon chains, while a peripheral stalk is formed by the delta and b chains.

It is found in the cell membrane. Its function is as follows. F(1)F(0) ATP synthase produces ATP from ADP in the presence of a proton or sodium gradient. F-type ATPases consist of two structural domains, F(1) containing the extramembraneous catalytic core and F(0) containing the membrane proton channel, linked together by a central stalk and a peripheral stalk. During catalysis, ATP synthesis in the catalytic domain of F(1) is coupled via a rotary mechanism of the central stalk subunits to proton translocation. Component of the F(0) channel, it forms part of the peripheral stalk, linking F(1) to F(0). The chain is ATP synthase subunit b from Leifsonia xyli subsp. xyli (strain CTCB07).